The following is a 248-amino-acid chain: Inhibitor of growth protein 4 (248 aa).

The stretch at 25-118 (FQLMRDLDQR…ADLKEKQIES (94 aa)) forms a coiled coil. N6-acetyllysine is present on residues Lys-112, Lys-127, and Lys-129. Residues 115-160 (QIESSDYDSSSSKGKKSRTQKEKKAARARSKGKNSDEEAPKAAQKK) are disordered. A Bipartite nuclear localization signal motif is present at residues 127-147 (KGKKSRTQKEKKAARARSKGK). Arg-132 bears the Citrulline mark. An N6-acetyllysine mark is found at Lys-145, Lys-147, and Lys-155. Arg-165 carries the citrulline modification. Residues 195 to 244 (PTYCLCHQVSYGEMIGCDNPDCSIERFHFACVGLTTKPRGKWFCPRCSQE) form a PHD-type zinc finger. Residues Cys-198, Cys-200, Cys-211, Cys-216, His-222, Cys-225, Cys-238, and Cys-241 each contribute to the Zn(2+) site.

This sequence belongs to the ING family. As to quaternary structure, homodimer. Component of the HBO1 complex composed of KAT7/HBO1, MEAF6, ING4 or ING5, and one scaffold subunit: complexes containing BRPF scaffold (BRPF1, BRD1/BRPF2 or BRPF3) direct KAT7/HBO1 specificity towards H3K14ac, while complexes containing JADE scaffold (JADE1, JADE2 and JADE3) mediate acetylation of histone H4. Interacts with H3K4me3 and to a lesser extent with H3K4me2, the interaction augments KAT7/HBO1 acetylation activity on H3 tails. Interacts with EP300, RELA and TP53; these interactions may be indirect. Interacts with EGLN1. Interacts with BCL2A1. Post-translationally, citrullination by PADI4 within the nuclear localization signal disrupts the interaction with p53 and increases susceptibility to degradation.

The protein localises to the nucleus. Its function is as follows. Component of HBO1 complexes, which specifically mediate acetylation of histone H3 at 'Lys-14' (H3K14ac), and have reduced activity toward histone H4. Through chromatin acetylation it may function in DNA replication. May inhibit tumor progression by modulating the transcriptional output of signaling pathways which regulate cell proliferation. Can suppress brain tumor angiogenesis through transcriptional repression of RELA/NFKB3 target genes when complexed with RELA. May also specifically suppress loss of contact inhibition elicited by activated oncogenes such as MYC. Represses hypoxia inducible factor's (HIF) activity by interacting with HIF prolyl hydroxylase 2 (EGLN1). Can enhance apoptosis induced by serum starvation in mammary epithelial cell line HC11. This is Inhibitor of growth protein 4 (ING4) from Bos taurus (Bovine).